Reading from the N-terminus, the 236-residue chain is 2,3,4,5-tetrahydropyridine-2,6-dicarboxylate N-acetyltransferase (236 aa).

Belongs to the transferase hexapeptide repeat family. DapH subfamily.

It catalyses the reaction (S)-2,3,4,5-tetrahydrodipicolinate + acetyl-CoA + H2O = L-2-acetamido-6-oxoheptanedioate + CoA. It functions in the pathway amino-acid biosynthesis; L-lysine biosynthesis via DAP pathway; LL-2,6-diaminopimelate from (S)-tetrahydrodipicolinate (acetylase route): step 1/3. Its function is as follows. Catalyzes the transfer of an acetyl group from acetyl-CoA to tetrahydrodipicolinate. The polypeptide is 2,3,4,5-tetrahydropyridine-2,6-dicarboxylate N-acetyltransferase (Bacillus licheniformis (strain ATCC 14580 / DSM 13 / JCM 2505 / CCUG 7422 / NBRC 12200 / NCIMB 9375 / NCTC 10341 / NRRL NRS-1264 / Gibson 46)).